The primary structure comprises 329 residues: Sex comb on midleg-like protein 1 (329 aa).

Residues Ser-138 and Ser-238 each carry the phosphoserine modification. Residues 138 to 157 (SPTLPVSRRENNSPSNLPRP) are disordered. The SAM domain occupies 258–325 (WSVEAVVLFL…YYIDRLKQGK (68 aa)).

It belongs to the SCM family.

Its subcellular location is the nucleus. Functionally, putative Polycomb group (PcG) protein. PcG proteins act by forming multiprotein complexes, which are required to maintain the transcriptionally repressive state of homeotic genes throughout development. May be involved in spermatogenesis during sexual maturation. This chain is Sex comb on midleg-like protein 1 (SCML1), found in Pan troglodytes (Chimpanzee).